Here is a 526-residue protein sequence, read N- to C-terminus: Dolichyl pyrophosphate Glc1Man9GlcNAc2 alpha-1,3-glucosyltransferase (526 aa).

11 helical membrane-spanning segments follow: residues 4 to 24 (FGIA…VTLL), 103 to 122 (LLFQ…YAVH), 143 to 163 (FILS…HIHF), 188 to 208 (GAFL…VAPA), 238 to 258 (LISL…PFLA), 334 to 354 (PLAT…CLWC), 368 to 388 (LCAL…ILLA), 389 to 409 (VLPM…FLIL), 427 to 449 (LPIK…KTLF), 461 to 481 (TFYL…FPFT), and 488 to 508 (PFIP…YAWL).

This sequence belongs to the ALG6/ALG8 glucosyltransferase family.

It localises to the endoplasmic reticulum membrane. The enzyme catalyses an alpha-D-Glc-(1-&gt;3)-alpha-D-Man-(1-&gt;2)-alpha-D-Man-(1-&gt;2)-alpha-D-Man-(1-&gt;3)-[alpha-D-Man-(1-&gt;2)-alpha-D-Man-(1-&gt;3)-[alpha-D-Man-(1-&gt;2)-alpha-D-Man-(1-&gt;6)]-alpha-D-Man-(1-&gt;6)]-beta-D-Man-(1-&gt;4)-beta-D-GlcNAc-(1-&gt;4)-alpha-D-GlcNAc-diphospho-di-trans,poly-cis-dolichol + a di-trans,poly-cis-dolichyl beta-D-glucosyl phosphate = an alpha-D-Glc-(1-&gt;3)-alpha-D-Glc-(1-&gt;3)-alpha-D-Man-(1-&gt;2)-alpha-D-Man-(1-&gt;2)-alpha-D-Man-(1-&gt;3)-[alpha-D-Man-(1-&gt;2)-alpha-D-Man-(1-&gt;3)-[alpha-D-Man-(1-&gt;2)-alpha-D-Man-(1-&gt;6)]-alpha-D-Man-(1-&gt;6)]-beta-D-Man-(1-&gt;4)-beta-D-GlcNAc-(1-&gt;4)-alpha-D-GlcNAc-diphospho-di-trans,poly-cis-dolichol + a di-trans,poly-cis-dolichyl phosphate + H(+). It functions in the pathway protein modification; protein glycosylation. In terms of biological role, dolichyl pyrophosphate Glc1Man9GlcNAc2 alpha-1,3-glucosyltransferase that operates in the biosynthetic pathway of dolichol-linked oligosaccharides, the glycan precursors employed in protein asparagine (N)-glycosylation. The assembly of dolichol-linked oligosaccharides begins on the cytosolic side of the endoplasmic reticulum membrane and finishes in its lumen. The sequential addition of sugars to dolichol pyrophosphate produces dolichol-linked oligosaccharides containing fourteen sugars, including two GlcNAcs, nine mannoses and three glucoses. Once assembled, the oligosaccharide is transferred from the lipid to nascent proteins by oligosaccharyltransferases. In the lumen of the endoplasmic reticulum, adds the second glucose residue from dolichyl phosphate glucose (Dol-P-Glc) onto the lipid-linked oligosaccharide intermediate Glc(1)Man(9)GlcNAc(2)-PP-Dol to produce Glc(2)Man(9)GlcNAc(2)-PP-Dol. Glc(2)Man(9)GlcNAc(2)-PP-Dol is a substrate for ALG10, the following enzyme in the biosynthetic pathway. Required for PKD1/Polycystin-1 maturation and localization to the plasma membrane of the primary cilia. The sequence is that of Dolichyl pyrophosphate Glc1Man9GlcNAc2 alpha-1,3-glucosyltransferase from Bos taurus (Bovine).